The sequence spans 819 residues: Probable cadmium/zinc-transporting ATPase HMA1, chloroplastic (819 aa).

Residues 1 to 17 (MEPATLTRSSSLTRFPY) constitute a chloroplast transit peptide. The Stromal segment spans residues 18 to 122 (RRGLSTLRLA…IGWVRLANYL (105 aa)). A compositionally biased stretch (basic and acidic residues) spans 66-79 (DHHHDHHHDDEQDH). Residues 66–87 (DHHHDHHHDDEQDHHNHHHHHH) are disordered. The chain crosses the membrane as a helical span at residues 123–144 (REHLHLCCSAAAMFLAAAVCPY). The Lumenal portion of the chain corresponds to 145–153 (LAPEPYIKS). The chain crosses the membrane as a helical span at residues 154–173 (LQNAFMIVGFPLVGVSASLD). Residues 174-180 (ALMDIAG) are Stromal-facing. Residues 181–201 (GKVNIHVLMALAAFASVFMGN) form a helical membrane-spanning segment. Position 202 (alanine 202) is a topological domain, lumenal. Residues 203-223 (LEGGLLLAMFNLAHIAEEFFT) traverse the membrane as a helical segment. Residues 224 to 361 (SRSMVDVKEL…KPKLQRWLDE (138 aa)) lie on the Stromal side of the membrane. A helical transmembrane segment spans residues 362–384 (FGENYSKVVVVLSLAIAFLGPFL). The Lumenal portion of the chain corresponds to 385–398 (FKWPFLSTAACRGS). The chain crosses the membrane as a helical span at residues 399–416 (VYRALGLMVAASPCALAV). Topologically, residues 417–737 (APLAYATAIS…AKSRQTTSLV (321 aa)) are stromal. Aspartate 453 serves as the catalytic 4-aspartylphosphate intermediate. Residues glutamate 682 and aspartate 686 each coordinate Mg(2+). The helical transmembrane segment at 738–757 (KQNVALALTSIFLAALPSVL) threads the bilayer. Topologically, residues 758–762 (GFVPL) are lumenal. A helical transmembrane segment spans residues 763 to 781 (WLTVLLHEGGTLLVCLNSV). Over 782-819 (RGLNDPSWSWKQDIVHLINKLRSQEPTSSSSNSLSSAH) the chain is Stromal.

Belongs to the cation transport ATPase (P-type) (TC 3.A.3) family. Type IB subfamily.

The protein resides in the plastid. It is found in the chloroplast inner membrane. It catalyses the reaction Zn(2+)(in) + ATP + H2O = Zn(2+)(out) + ADP + phosphate + H(+). The catalysed reaction is Cd(2+)(in) + ATP + H2O = Cd(2+)(out) + ADP + phosphate + H(+). Involved in cadmium/zinc transport. The chain is Probable cadmium/zinc-transporting ATPase HMA1, chloroplastic (HMA1) from Arabidopsis thaliana (Mouse-ear cress).